We begin with the raw amino-acid sequence, 209 residues long: Tumor suppressor candidate gene 1 protein (209 aa).

3 disordered regions span residues 1 to 55 (MWRM…DGAR), 111 to 157 (ALRL…LRAR), and 172 to 209 (LHLE…GPWL). Positions 14-47 (CCGGDGAADGRGPGRSGRARGGGSPSGGGGGVGW) are enriched in gly residues. A coiled-coil region spans residues 70–114 (LEAIRARDEWDRQNARLRQENARLRLENRRLKRENRSLFRQALRL). The span at 125 to 149 (EARRVPEEASTNRRARDSGREDEPG) shows a compositional bias: basic and acidic residues. A Phosphoserine modification is found at serine 150. Residues 152 to 177 (RALRARLEKLEAMYRRALLQLHLEQR) are a coiled coil. A compositionally biased stretch (basic and acidic residues) spans 174–188 (LEQRGPRPSGDKEEQ).

As to expression, widely expressed at low level. Expressed at higher level in testis, weakly expressed in muscle, colon, lung and spleen. Not detected in 3 non small cell lung carcinoma (NSCLC) cell lines with homozygous deletion of the 9p region, while it is down-regulated in 3 other tumor cell lines.

This is Tumor suppressor candidate gene 1 protein (TUSC1) from Homo sapiens (Human).